A 413-amino-acid polypeptide reads, in one-letter code: Histidine decarboxylase (413 aa).

Histidine 129 contributes to the substrate binding site. Lysine 242 is modified (N6-(pyridoxal phosphate)lysine).

It belongs to the group II decarboxylase family. Requires pyridoxal 5'-phosphate as cofactor. Ripe fruits; not detected in leaves and unripe fruit.

The catalysed reaction is L-histidine + H(+) = histamine + CO2. The protein is Histidine decarboxylase (HDC) of Solanum lycopersicum (Tomato).